An 842-amino-acid polypeptide reads, in one-letter code: TATA box-binding protein-associated factor, RNA polymerase I, subunit C (842 aa).

3 disordered regions span residues 574-605, 667-690, and 702-842; these read SSLR…PSWT, RPGD…QQDE, and QAAA…RMGF. The span at 577–588 shows a compositional bias: basic and acidic residues; it reads REPDHPAPERPA. The span at 745–760 shows a compositional bias: polar residues; the sequence is DASSAPHSQDLSNSEA. The segment covering 783-794 has biased composition (basic and acidic residues); the sequence is QHERRQTLRDYM. At threonine 808 the chain carries Phosphothreonine. Over residues 809 to 826 the composition is skewed to low complexity; the sequence is PPSQTSSRQTRSFRQQTP. The segment covering 833–842 has biased composition (basic residues); that stretch reads PPRKKPRMGF.

As to quaternary structure, component of the transcription factor SL1/TIF-IB complex, composed of TBP and at least TAF1A, TAF1B, TAF1C and TAF1D. In the complex interacts directly with TBP, TAF1A and TAF1B. Interaction of the SL1/TIF-IB subunits with TBP excludes interaction of TBP with the transcription factor IID (TFIID) subunits. Interacts with MYC and RRN3. Interacts with p53/TP53; the interaction prevents the association of SL1/TIF-IB with UBTF and represses RNA polymerase I transcription. Part of Pol I pre-initiation complex (PIC), in which Pol I core assembles with RRN3 and promoter-bound UTBF and SL1/TIF-IB complex.

The protein localises to the nucleus. It localises to the nucleolus. Component of the transcription factor SL1/TIF-IB complex, which is involved in the assembly of the PIC (pre-initiation complex) during RNA polymerase I-dependent transcription. The rate of PIC formation probably is primarily dependent on the rate of association of SL1/TIF-IB with the rDNA promoter. SL1/TIF-IB is involved in stabilization of nucleolar transcription factor 1/UBTF on rDNA. Formation of SL1/TIF-IB excludes the association of TBP with TFIID subunits. Recruits RNA polymerase I to the rRNA gene promoter via interaction with RRN3. The chain is TATA box-binding protein-associated factor, RNA polymerase I, subunit C (Taf1c) from Rattus norvegicus (Rat).